The sequence spans 2353 residues: Nonribosomal peptide synthetase 7 (2353 aa).

An adenylation 1 region spans residues 305 to 684; sequence TFSALNTRAN…AIEEVEDSAV (380 aa). A Carrier 1 domain is found at 776–853; sequence RDLTDSEKVV…QVAAAVQPQP (78 aa). Ser-813 carries the post-translational modification O-(pantetheine 4'-phosphoryl)serine. The tract at residues 885-1147 is condensation 1; the sequence is EDAFPVTPFQ…LMVAPLRVKV (263 aa). The adenylation 2 stretch occupies residues 1338–1725; the sequence is TYAGLAIKMN…QTNVFRQCAV (388 aa). The region spanning 1826–1902 is the Carrier 2 domain; it reads EICSEAEREL…EQAALMVQGQ (77 aa). An O-(pantetheine 4'-phosphoryl)serine modification is found at Ser-1863. The interval 1939–2214 is condensation 2; the sequence is EDIYPCSPGQ…NGNCANFLPY (276 aa).

The protein belongs to the NRP synthetase family.

Functionally, nonribosomal peptide synthesis (NRPS) is a key mechanism responsible for the biosynthesis of bioactive metabolites which are potentially contributing to organismal virulence. This Aspergillus fumigatus (strain ATCC MYA-4609 / CBS 101355 / FGSC A1100 / Af293) (Neosartorya fumigata) protein is Nonribosomal peptide synthetase 7 (NRPS7).